The chain runs to 479 residues: Deoxyribodipyrimidine photo-lyase (479 aa).

Positions 6-137 (SLKAVWFRRD…PFYTFEDAYL (132 aa)) constitute a Photolyase/cryptochrome alpha/beta domain. Residue Tyr229 participates in FAD binding. Residue Arg233 participates in DNA binding. Residues 241–245 (TSRLS) and 278–285 (ELAWRDFY) contribute to the FAD site. Interaction with DNA stretches follow at residues 278–285 (ELAWRDFY) and 344–345 (NR). An FAD-binding site is contributed by 375–377 (DYD). Position 407 (Gln407) interacts with DNA.

The protein belongs to the DNA photolyase class-1 family. As to quaternary structure, monomer. Requires FAD as cofactor. The cofactor is (6R)-5,10-methylene-5,6,7,8-tetrahydrofolate.

It carries out the reaction cyclobutadipyrimidine (in DNA) = 2 pyrimidine residues (in DNA).. In terms of biological role, involved in repair of UV radiation-induced DNA damage. Catalyzes the light-dependent monomerization (300-600 nm) of cyclobutyl pyrimidine dimers (in cis-syn configuration), which are formed between adjacent bases on the same DNA strand upon exposure to ultraviolet radiation. In Alkalihalophilus pseudofirmus (strain ATCC BAA-2126 / JCM 17055 / OF4) (Bacillus pseudofirmus), this protein is Deoxyribodipyrimidine photo-lyase (phr).